Consider the following 679-residue polypeptide: Pollen receptor-like kinase 4 (679 aa).

An N-terminal signal peptide occupies residues Met1–Ser39. LRR repeat units lie at residues Ile118–Phe141, Gly142–Gly165, His167–Pro191, Leu193–Leu217, and Ser234–Ser257. The segment covering Leu252–Pro269 has biased composition (low complexity). The interval Leu252 to Glu271 is disordered. A helical transmembrane segment spans residues Phe278–Val298. Residues Ser311–Ser344 are disordered. Over residues Asp319 to Ala336 the composition is skewed to basic and acidic residues. The region spanning Arg372–Leu646 is the Protein kinase domain. Ser374 carries the phosphoserine modification. ATP is bound by residues Leu378–Ser386 and Lys400. 2 positions are modified to phosphoserine: Ser452 and Ser455. A Phosphothreonine modification is found at Thr472. Tyr542 is subject to Phosphotyrosine.

Belongs to the protein kinase superfamily. Ser/Thr protein kinase family. In terms of assembly, interacts in vitro with ROPGEF1 (via PRONE domain). Interacts weakly with the GRI peptide. Expressed in pollen and/or in flowers, but not in leaves.

Its subcellular location is the membrane. The enzyme catalyses L-seryl-[protein] + ATP = O-phospho-L-seryl-[protein] + ADP + H(+). It carries out the reaction L-threonyl-[protein] + ATP = O-phospho-L-threonyl-[protein] + ADP + H(+). In terms of biological role, receptor-like kinase involved in the control of pollen germination and pollen tube polar growth. Can phosphorylate ROPGEF1 in vitro. This chain is Pollen receptor-like kinase 4, found in Arabidopsis thaliana (Mouse-ear cress).